The chain runs to 325 residues: Acetyl-coenzyme A carboxylase carboxyl transferase subunit alpha (325 aa).

Residues 43–297 (ELENNSTQLR…KTSLIAHLRQ (255 aa)) enclose the CoA carboxyltransferase C-terminal domain.

Belongs to the AccA family. In terms of assembly, acetyl-CoA carboxylase is a heterohexamer composed of biotin carboxyl carrier protein (AccB), biotin carboxylase (AccC) and two subunits each of ACCase subunit alpha (AccA) and ACCase subunit beta (AccD).

It is found in the cytoplasm. The catalysed reaction is N(6)-carboxybiotinyl-L-lysyl-[protein] + acetyl-CoA = N(6)-biotinyl-L-lysyl-[protein] + malonyl-CoA. It functions in the pathway lipid metabolism; malonyl-CoA biosynthesis; malonyl-CoA from acetyl-CoA: step 1/1. In terms of biological role, component of the acetyl coenzyme A carboxylase (ACC) complex. First, biotin carboxylase catalyzes the carboxylation of biotin on its carrier protein (BCCP) and then the CO(2) group is transferred by the carboxyltransferase to acetyl-CoA to form malonyl-CoA. The sequence is that of Acetyl-coenzyme A carboxylase carboxyl transferase subunit alpha from Cyanothece sp. (strain PCC 7425 / ATCC 29141).